A 1000-amino-acid polypeptide reads, in one-letter code: MTQNPSSDRRPDTAQSVANGETLDGALFTGLTDTAAAQDESSETSASFATIDGEDKSEVGDALDWFSDGKETDINGDEADRGIQADTQAKTLVSLENLTEEPEIDGAEFMAEAFIAENTAVEDVSPNPNPAIDTDALAALTQSAVELTPPPPINLPKVELPPMQPLAPLMAIADPDNLSPMSTSIQAPTQSGGLSLRNKAVLIALLIGLIPAGVIGGLNLSSVDRLPVPQTEQQVKDSTTKQIRDQILIGLLVTAVGAAFVAYWMVGENTKAQTALALKAKHSHRNLDQPLAVAGDELAIADQTIDALSAQVEKLRHQQDLSLKQAELLTELSRANLSDIDEIQGVIQKNLDQARALFGCERLVFYYHPRYQPEAMVVQALDLTTQGLIDSKDPHPWGQEDMPSQIVAINDTSGASISNPHRQWLEQHQVKASLTVPLHRDNYPLGLLMAHHCQRPHQWEMRERQFLQQLTEELQTTLDRANLIQERNESAQQAQILKELTLKISAAINSEQVFDIAAQEIRLALKADRVIVYRFDATWAGTVIVESVAEGYPKALGATIADPCFADSYVEKYRSGRIQATRDIYNAGLTPCHIGQLKPFEVKANLVAPINYKGNLLGLLIAHQCSGPRDWHQNEIDLFGQLTVQVGLALERSDLLAQQKIAEVEQRQMREKMQKRALELLMEVDPVSRGDLTIRAHVTEDEIGTIADSYNATIESLRRIVTQVQTAASQFTETTDTNEVAVRQLAQQANRQALDVAEALERLQAMNKSIQAVAENAAQAESAVQRATQTVDQGEDAMNRTVDGIVAIRETVAATAKQVKRLGESSQKISKVVNLIGSFADQTNLLALNAAIEAAHAGEEGRGFAVVADEVRSLARQSAEATAEIAQLVATIQAETNEVVNAMEAGTEQVVVGTKLVEETRRSLNQITAVSAQISGLVEAITSAAIEQSQTSESVTQTMALVAQIADKNSSEASGVSATFKELLAVAQSLQEAVKQFKVQ.

The tract at residues 1–59 is disordered; the sequence is MTQNPSSDRRPDTAQSVANGETLDGALFTGLTDTAAAQDESSETSASFATIDGEDKSEV. 2 GAF domains span residues 342–478 and 509–650; these read EIQG…QTTL and NSEQ…GLAL. The region spanning 671 to 722 is the HAMP domain; sequence EKMQKRALELLMEVDPVSRGDLTIRAHVTEDEIGTIADSYNATIESLRRIVT. The 237-residue stretch at 727–963 folds into the Methyl-accepting transducer domain; it reads AASQFTETTD…SVTQTMALVA (237 aa).

The protein belongs to the methyl-accepting chemotaxis (MCP) protein family.

This Synechocystis sp. (strain ATCC 27184 / PCC 6803 / Kazusa) protein is Putative methyl-accepting chemotaxis protein sll0041.